Reading from the N-terminus, the 347-residue chain is MNPMIFIILLATIMLGSSIVMMSSHWFMTWLGFEMNMMAIVPVLMKKYSPRSMEAATKYFLTQATASMILMLAIIINLMYSGQWTIANMENHTASMLITIALVMKLGLAPFHFWVPEVTQGIPLSSGLILLTWQKIAPLSLLYQIHSSINMELFLTMSLLSIVIGGWGGLNQTQLRKIMAYSSIGHMGWMMAIMNYNPNLSFLNLLVYILMTSSMFALLIFSSTTSTLSLSLAWNKTPIIATMSLIILLSLGGLPPLTGFMPKWMIIQELTKNNSTILPTLMAISALLNLFFYIRLTYSTALTMFPTMNNMKLTWQFQNTNILPMILPLITISTLALPLTPLFLMLN.

10 helical membrane passes run 3–23 (PMIF…VMMS), 25–45 (HWFM…PVLM), 59–79 (YFLT…INLM), 96–116 (MLIT…FWVP), 122–142 (IPLS…LSLL), 149–169 (INME…GWGG), 201–221 (SFLN…LLIF), 239–259 (IIAT…PLTG), 274–294 (NSTI…FFYI), and 326–346 (ILPL…FLML).

It belongs to the complex I subunit 2 family. In terms of assembly, core subunit of respiratory chain NADH dehydrogenase (Complex I) which is composed of 45 different subunits. Interacts with TMEM242.

The protein resides in the mitochondrion inner membrane. It catalyses the reaction a ubiquinone + NADH + 5 H(+)(in) = a ubiquinol + NAD(+) + 4 H(+)(out). Core subunit of the mitochondrial membrane respiratory chain NADH dehydrogenase (Complex I) that is believed to belong to the minimal assembly required for catalysis. Complex I functions in the transfer of electrons from NADH to the respiratory chain. The immediate electron acceptor for the enzyme is believed to be ubiquinone. The protein is NADH-ubiquinone oxidoreductase chain 2 of Crocidura hildegardeae (Hildegarde's shrew).